Consider the following 189-residue polypeptide: Pyridoxal 5'-phosphate synthase subunit PdxT (189 aa).

L-glutamine is bound at residue 47-49 (GES). Cys-79 serves as the catalytic Nucleophile. L-glutamine contacts are provided by residues Arg-106 and 135 to 136 (IR). Catalysis depends on charge relay system residues His-171 and Glu-173.

The protein belongs to the glutaminase PdxT/SNO family. As to quaternary structure, in the presence of PdxS, forms a dodecamer of heterodimers. Only shows activity in the heterodimer.

It catalyses the reaction aldehydo-D-ribose 5-phosphate + D-glyceraldehyde 3-phosphate + L-glutamine = pyridoxal 5'-phosphate + L-glutamate + phosphate + 3 H2O + H(+). It carries out the reaction L-glutamine + H2O = L-glutamate + NH4(+). Its pathway is cofactor biosynthesis; pyridoxal 5'-phosphate biosynthesis. Catalyzes the hydrolysis of glutamine to glutamate and ammonia as part of the biosynthesis of pyridoxal 5'-phosphate. The resulting ammonia molecule is channeled to the active site of PdxS. This is Pyridoxal 5'-phosphate synthase subunit PdxT from Caldanaerobacter subterraneus subsp. tengcongensis (strain DSM 15242 / JCM 11007 / NBRC 100824 / MB4) (Thermoanaerobacter tengcongensis).